The following is a 249-amino-acid chain: Type III pantothenate kinase (249 aa).

Residue D6 to K13 coordinates ATP. Residues Y93 and G100–R103 each bind substrate. D102 (proton acceptor) is an active-site residue. D122 lines the K(+) pocket. T125 contacts ATP. Substrate is bound at residue T181.

The protein belongs to the type III pantothenate kinase family. In terms of assembly, homodimer. It depends on NH4(+) as a cofactor. K(+) serves as cofactor.

The protein localises to the cytoplasm. It catalyses the reaction (R)-pantothenate + ATP = (R)-4'-phosphopantothenate + ADP + H(+). The protein operates within cofactor biosynthesis; coenzyme A biosynthesis; CoA from (R)-pantothenate: step 1/5. Its function is as follows. Catalyzes the phosphorylation of pantothenate (Pan), the first step in CoA biosynthesis. This is Type III pantothenate kinase from Pseudomonas putida (strain ATCC 700007 / DSM 6899 / JCM 31910 / BCRC 17059 / LMG 24140 / F1).